The sequence spans 123 residues: Small ribosomal subunit protein uS12cz/uS12cy/uS12cx/uS12w (123 aa).

A compositionally biased stretch (polar residues) spans 1–13; that stretch reads MPTSNQLLRNSRQ. Positions 1 to 30 are disordered; the sequence is MPTSNQLLRNSRQPVRKTKKTPALRGCPQR. Residues 14–30 show a composition bias toward basic residues; it reads PVRKTKKTPALRGCPQR.

The protein belongs to the universal ribosomal protein uS12 family. Part of the 30S ribosomal subunit.

The protein localises to the plastid. It localises to the chloroplast. With S4 and S5 plays an important role in translational accuracy. Located at the interface of the 30S and 50S subunits. This Pelargonium hortorum (Common geranium) protein is Small ribosomal subunit protein uS12cz/uS12cy/uS12cx/uS12w (rps12-A).